The chain runs to 237 residues: uncharacterized protein (237 aa).

ATP is bound at residue 50 to 57 (APPGTGKS).

This is an uncharacterized protein from Escherichia coli (strain K12).